The sequence spans 309 residues: Ankyrin repeat and SOCS box protein 12 (309 aa).

5 ANK repeats span residues 63–92, 96–125, 129–158, 171–200, and 213–243; these read VPGT…DVDS, KAQT…SPGG, NNCS…EANV, SCSG…DPDY, and RPRT…NIYL. In terms of domain architecture, SOCS box spans 268–308; it reads PRSLLSQVRLVVRRALCQAGQPQAINQLDIPPMLISYLKHQ.

Belongs to the ankyrin SOCS box (ASB) family. In terms of assembly, interacts with CUL5 and RNF7.

It participates in protein modification; protein ubiquitination. In terms of biological role, probable substrate-recognition component of a SCF-like ECS (Elongin-Cullin-SOCS-box protein) E3 ubiquitin-protein ligase complex which mediates the ubiquitination and subsequent proteasomal degradation of target proteins. This chain is Ankyrin repeat and SOCS box protein 12 (ASB12), found in Homo sapiens (Human).